A 281-amino-acid chain; its full sequence is ATP phosphoribosyltransferase (281 aa).

Belongs to the ATP phosphoribosyltransferase family. Long subfamily. As to quaternary structure, equilibrium between an active dimeric form, an inactive hexameric form and higher aggregates. Interconversion between the various forms is largely reversible and is influenced by the natural substrates and inhibitors of the enzyme. Mg(2+) is required as a cofactor.

It localises to the cytoplasm. The catalysed reaction is 1-(5-phospho-beta-D-ribosyl)-ATP + diphosphate = 5-phospho-alpha-D-ribose 1-diphosphate + ATP. The protein operates within amino-acid biosynthesis; L-histidine biosynthesis; L-histidine from 5-phospho-alpha-D-ribose 1-diphosphate: step 1/9. Its activity is regulated as follows. Feedback inhibited by histidine. In terms of biological role, catalyzes the condensation of ATP and 5-phosphoribose 1-diphosphate to form N'-(5'-phosphoribosyl)-ATP (PR-ATP). Has a crucial role in the pathway because the rate of histidine biosynthesis seems to be controlled primarily by regulation of HisG enzymatic activity. The protein is ATP phosphoribosyltransferase of Mycolicibacterium gilvum (strain PYR-GCK) (Mycobacterium gilvum (strain PYR-GCK)).